Consider the following 147-residue polypeptide: Succinate dehydrogenase assembly factor 2, mitochondrial (147 aa).

This sequence belongs to the SDHAF2 family. As to quaternary structure, interacts with the flavoprotein subunit within the SDH catalytic dimer.

The protein localises to the mitochondrion matrix. In terms of biological role, plays an essential role in the assembly of succinate dehydrogenase (SDH), an enzyme complex (also referred to as respiratory complex II) that is a component of both the tricarboxylic acid (TCA) cycle and the mitochondrial electron transport chain, and which couples the oxidation of succinate to fumarate with the reduction of ubiquinone (coenzyme Q) to ubiquinol. Required for flavinylation (covalent attachment of FAD) of the flavoprotein subunit of the SDH catalytic dimer. This Drosophila grimshawi (Hawaiian fruit fly) protein is Succinate dehydrogenase assembly factor 2, mitochondrial.